The primary structure comprises 708 residues: Capsid scaffolding protein (708 aa).

Active-site charge relay system residues include H63, S132, and H157. Disordered stretches follow at residues 270–339 (SAER…MSHP), 455–565 (HPSY…QQQR), and 593–620 (ALPSAASSSPTTTTVCTPTSELTSGGGE). Low complexity predominate over residues 284 to 293 (PAAGARVPSS). Positions 294 to 311 (SPSPPVEPPSPVQPPALP) are enriched in pro residues. The span at 326 to 339 (SPSEPAEAASMSHP) shows a compositional bias: low complexity. An interaction with pAP region spans residues 333 to 352 (AASMSHPLSAAVPAATAPPG). Basic residues predominate over residues 498 to 513 (KQHRHGGSGGHNKRRK). 2 consecutive short sequence motifs (nuclear localization signal) follow at residues 510–515 (KRRKET) and 537–543 (RARKRLK). Positions 593 to 615 (ALPSAASSSPTTTTVCTPTSELT) are enriched in low complexity. The interaction with major capsid protein stretch occupies residues 688–708 (PPKDMVDLNRRIFVAALNKLE).

The protein belongs to the herpesviridae capsid scaffolding protein family. Homomultimer. Interacts with major capsid protein. As to quaternary structure, exists in a monomer-dimer equilibrium with the dimer being the active species. Post-translationally, capsid scaffolding protein is cleaved by assemblin after formation of the spherical procapsid. As a result, the capsid obtains its mature, icosahedral shape. Cleavages occur at two or more sites: release (R-site) and maturation (M-site).

Its subcellular location is the host cytoplasm. It localises to the host nucleus. The enzyme catalyses Cleaves -Ala-|-Ser- and -Ala-|-Ala- bonds in the scaffold protein.. Functionally, acts as a scaffold protein by binding major capsid protein in the cytoplasm, inducing the nuclear localization of both proteins. Multimerizes in the nucleus such as major capsid protein forms the icosahedral T=16 capsid. Autocatalytic cleavage releases the assembly protein, and subsequently abolishes interaction with major capsid protein. Cleavages products are evicted from the capsid before or during DNA packaging. Protease that plays an essential role in virion assembly within the nucleus. Catalyzes the cleavage of the assembly protein after formation of the spherical procapsid. By that cleavage, the capsid matures and gains its icosahedral shape. The cleavage sites seem to include -Ala-Ser-, -Ala-Ala-, as well as Ala-Thr bonds. Assemblin and cleavages products are evicted from the capsid before or during DNA packaging. In terms of biological role, plays a major role in capsid assembly. Acts as a scaffold protein by binding major capsid protein. Multimerizes in the nucleus such as major capsid protein forms the icosahedral T=16 capsid. Cleaved by assemblin after capsid completion. The cleavages products are evicted from the capsid before or during DNA packaging. This chain is Capsid scaffolding protein (UL80), found in Homo sapiens (Human).